The following is a 597-amino-acid chain: MFS-type transporter FPY5 (597 aa).

The segment at 1–55 (MSETTGLPLKHLQGSPPGTPVNTNNESNEASPDDGCRLPDTVTEAEASSDNHGSV) is disordered. 2 stretches are compositionally biased toward polar residues: residues 20 to 30 (PVNTNNESNEA) and 46 to 55 (EASSDNHGSV). Asn-25 is a glycosylation site (N-linked (GlcNAc...) asparagine). Asn-72 carries N-linked (GlcNAc...) asparagine glycosylation. 9 helical membrane-spanning segments follow: residues 94–114 (LSLLLSTLETTIVSTALVSIV), 120–140 (FNMAGWIVTSYLVTYTGFLII), 147–167 (IFGCKLMLLLAITIFTVFSMA), 183–203 (FQGMGGSGIYSLSTIMVPLMV), 214–234 (IMSSTFILSSVLGPILGGAIT), 241–261 (WVFYFNGPGGALAAVLLAFSV), 286–306 (VDFVGMTVSLAASILIIFALE), 316–336 (SGAIVSTFVLSGVLWIAFIAW), and 360–380 (FVMGLLLNGFFTGFPFMAALI). Asn-390 is a glycosylation site (N-linked (GlcNAc...) asparagine). Transmembrane regions (helical) follow at residues 402–422 (LPLLLLSPLATAINGILVSKL), 424–444 (VPPLYTLFLGGSLQTIGVGLY), 463–483 (IMGLGFGFNLSTILMMVPLVV), 498–518 (IRVLGGTIGLAVCSALLINHI), and 562–582 (EQMRVMLYFSIASILSLVLLV).

The protein belongs to the major facilitator superfamily. TCR/Tet family.

The protein localises to the membrane. It functions in the pathway secondary metabolite biosynthesis. MFS-type transporter; part of the gene cluster that mediates the biosynthesis of the gamma-pyrones fusapyrone (FPY) and deoxyfusapyrone (dFPY). The polypeptide is MFS-type transporter FPY5 (Fusarium mangiferae (Mango malformation disease fungus)).